We begin with the raw amino-acid sequence, 364 residues long: MPLLLLLPLLWAGALAMDPNFWLQVQESVTVQEGLCVLVPCTFFHPIPYYDKNSPVHGYWFREGAIISRDSPVATNKLDQEVQEETQGRFRLLGDPSRNNCSLSIVDARRRDNGSYFFRMERGSTKYSYKSPQLSVHVTDLTHRPKILIPGTLEPGHSKNLTCSVSWACEQGTPPIFSWLSAAPTSLGPRTTHSSVLIITPRPQDHGTNLTCQVKFAGAGVTTERTIQLNVTYVPQNPTTGIFPGDGSGKQETRAGVVHGAIGGAGVTALLALCLCLIFFIVKTHRRKAARTAVGRNDTHPTTGSASPKHQKKSKLHGPTETSSCSGAAPTVEMDEELHYASLNFHGMNPSKDTSTEYSEVRTQ.

Residues 1–17 (MPLLLLLPLLWAGALAM) form the signal peptide. The Extracellular portion of the chain corresponds to 18-259 (DPNFWLQVQE…KQETRAGVVH (242 aa)). Residues 19 to 135 (PNFWLQVQES…KYSYKSPQLS (117 aa)) enclose the Ig-like V-type domain. Cystine bridges form between C36/C169, C41/C101, and C163/C212. N-linked (GlcNAc...) asparagine glycosylation is found at N100 and N113. R119 contributes to the N-acetylneuraminate binding site. Residues 145-228 (PKILIPGTLE…AGVTTERTIQ (84 aa)) form the Ig-like C2-type domain. E154 contributes to the D-galactose binding site. 3 N-linked (GlcNAc...) asparagine glycosylation sites follow: N160, N209, and N230. Residues 260–282 (GAIGGAGVTALLALCLCLIFFIV) traverse the membrane as a helical segment. The Cytoplasmic segment spans residues 283–364 (KTHRRKAART…STEYSEVRTQ (82 aa)). Residues 290–364 (ARTAVGRNDT…STEYSEVRTQ (75 aa)) form a disordered region. 2 consecutive short sequence motifs (ITIM motif) follow at residues 338-343 (LHYASL) and 356-361 (TEYSEV). 2 positions are modified to phosphotyrosine; by LCK: Y340 and Y358.

The protein belongs to the immunoglobulin superfamily. SIGLEC (sialic acid binding Ig-like lectin) family. Homodimer; disulfide-linked. Interacts with PTPN6/SHP-1 and PTPN11/SHP-2 upon phosphorylation. Interacts with C1QA (via C-terminus); this interaction activates CD33 inhibitory motifs. Glycosylated. Glycosylation at Asn-100 is critical for regulating ligand recognition. In terms of processing, phosphorylation of Tyr-340 is involved in binding to PTPN6 and PTPN11. Phosphorylation of Tyr-358 is involved in binding to PTPN6. LCK phosphorylates Tyr-340 efficiently and Tyr-358 to a lesser extent. Monocytic/myeloid lineage cells. In the brain, CD33 is mainly expressed on microglial cells.

It is found in the cell membrane. The protein localises to the peroxisome. Functionally, sialic-acid-binding immunoglobulin-like lectin (Siglec) that plays a role in mediating cell-cell interactions and in maintaining immune cells in a resting state. Preferentially recognizes and binds alpha-2,3- and more avidly alpha-2,6-linked sialic acid-bearing glycans. Upon engagement of ligands such as C1q or syalylated glycoproteins, two immunoreceptor tyrosine-based inhibitory motifs (ITIMs) located in CD33 cytoplasmic tail are phosphorylated by Src-like kinases such as LCK. These phosphorylations provide docking sites for the recruitment and activation of protein-tyrosine phosphatases PTPN6/SHP-1 and PTPN11/SHP-2. In turn, these phosphatases regulate downstream pathways through dephosphorylation of signaling molecules. One of the repressive effect of CD33 on monocyte activation requires phosphoinositide 3-kinase/PI3K. The sequence is that of Myeloid cell surface antigen CD33 (CD33) from Homo sapiens (Human).